The following is a 156-amino-acid chain: Ribosomal RNA large subunit methyltransferase H (156 aa).

Residues leucine 73, glycine 104, and 123 to 128 (ISSMTL) each bind S-adenosyl-L-methionine.

The protein belongs to the RNA methyltransferase RlmH family. In terms of assembly, homodimer.

It is found in the cytoplasm. The catalysed reaction is pseudouridine(1915) in 23S rRNA + S-adenosyl-L-methionine = N(3)-methylpseudouridine(1915) in 23S rRNA + S-adenosyl-L-homocysteine + H(+). Its function is as follows. Specifically methylates the pseudouridine at position 1915 (m3Psi1915) in 23S rRNA. The polypeptide is Ribosomal RNA large subunit methyltransferase H (Burkholderia lata (strain ATCC 17760 / DSM 23089 / LMG 22485 / NCIMB 9086 / R18194 / 383)).